Reading from the N-terminus, the 349-residue chain is Transmembrane protein 255A (349 aa).

Helical transmembrane passes span 30 to 50 (IYVTVTLLIVSVLILTVGLAA), 57 to 77 (VTVGGYYPGVILGFGSFLGII), 89 to 109 (LVASIVFISFGVIAAFCCAIV), and 226 to 246 (TILNIVGLFLGIITAAVLGGF). Residues 301–329 (VFPSSPPSGLSDEPQSASPSPSYMWSSSA) are disordered. Over residues 316–329 (SASPSPSYMWSSSA) the composition is skewed to low complexity.

It belongs to the TMEM255 family.

It localises to the membrane. This Macaca fascicularis (Crab-eating macaque) protein is Transmembrane protein 255A (TMEM255A).